The primary structure comprises 44 residues: Keratin-associated protein 20-3 (44 aa).

Belongs to the KRTAP type 20 family. Interacts with hair keratins.

In terms of biological role, in the hair cortex, hair keratin intermediate filaments are embedded in an interfilamentous matrix, consisting of hair keratin-associated proteins (KRTAP), which are essential for the formation of a rigid and resistant hair shaft through their extensive disulfide bond cross-linking with abundant cysteine residues of hair keratins. The matrix proteins include the high-sulfur and high-glycine-tyrosine keratins. This chain is Keratin-associated protein 20-3 (KRTAP20-3), found in Homo sapiens (Human).